We begin with the raw amino-acid sequence, 272 residues long: 3-methyl-2-oxobutanoate hydroxymethyltransferase (272 aa).

Residues Asp43 and Asp82 each coordinate Mg(2+). Residues Asp43–Ser44, Asp82, and Lys112 contribute to the 3-methyl-2-oxobutanoate site. A Mg(2+)-binding site is contributed by Glu114. Glu179 (proton acceptor) is an active-site residue.

This sequence belongs to the PanB family. Homodecamer; pentamer of dimers. Requires Mg(2+) as cofactor.

It localises to the cytoplasm. The catalysed reaction is 3-methyl-2-oxobutanoate + (6R)-5,10-methylene-5,6,7,8-tetrahydrofolate + H2O = 2-dehydropantoate + (6S)-5,6,7,8-tetrahydrofolate. Its pathway is cofactor biosynthesis; (R)-pantothenate biosynthesis; (R)-pantoate from 3-methyl-2-oxobutanoate: step 1/2. Catalyzes the reversible reaction in which hydroxymethyl group from 5,10-methylenetetrahydrofolate is transferred onto alpha-ketoisovalerate to form ketopantoate. This is 3-methyl-2-oxobutanoate hydroxymethyltransferase from Staphylococcus aureus (strain COL).